The following is a 212-amino-acid chain: Ribosomal RNA small subunit methyltransferase G (212 aa).

Residues G72, L77, 123 to 124 (VE), and R138 each bind S-adenosyl-L-methionine.

Belongs to the methyltransferase superfamily. RNA methyltransferase RsmG family.

It is found in the cytoplasm. The enzyme catalyses guanosine(527) in 16S rRNA + S-adenosyl-L-methionine = N(7)-methylguanosine(527) in 16S rRNA + S-adenosyl-L-homocysteine. Its function is as follows. Specifically methylates the N7 position of guanine in position 527 of 16S rRNA. The chain is Ribosomal RNA small subunit methyltransferase G from Histophilus somni (strain 129Pt) (Haemophilus somnus).